Reading from the N-terminus, the 133-residue chain is Small ribosomal subunit protein uS8 (133 aa).

The segment at 1-29 (MANHDPISDMLTRIRNASEKRHETTRIPA) is disordered. Basic and acidic residues predominate over residues 16 to 25 (NASEKRHETT).

This sequence belongs to the universal ribosomal protein uS8 family. In terms of assembly, part of the 30S ribosomal subunit. Contacts proteins S5 and S12.

Functionally, one of the primary rRNA binding proteins, it binds directly to 16S rRNA central domain where it helps coordinate assembly of the platform of the 30S subunit. This chain is Small ribosomal subunit protein uS8, found in Prochlorococcus marinus (strain MIT 9211).